The following is a 172-amino-acid chain: Shikimate kinase (172 aa).

Residue glycine 11–threonine 16 participates in ATP binding. Serine 15 contacts Mg(2+). Substrate is bound by residues aspartate 33, arginine 57, and glycine 79. Residue arginine 117 participates in ATP binding. Arginine 136 is a substrate binding site. Arginine 153 serves as a coordination point for ATP.

Belongs to the shikimate kinase family. In terms of assembly, monomer. Mg(2+) is required as a cofactor.

It is found in the cytoplasm. The catalysed reaction is shikimate + ATP = 3-phosphoshikimate + ADP + H(+). It functions in the pathway metabolic intermediate biosynthesis; chorismate biosynthesis; chorismate from D-erythrose 4-phosphate and phosphoenolpyruvate: step 5/7. Functionally, catalyzes the specific phosphorylation of the 3-hydroxyl group of shikimic acid using ATP as a cosubstrate. The polypeptide is Shikimate kinase (Pseudomonas syringae pv. syringae (strain B728a)).